Here is a 217-residue protein sequence, read N- to C-terminus: tRNA (guanine-N(7)-)-methyltransferase (217 aa).

Glutamate 46, glutamate 71, aspartate 98, and aspartate 120 together coordinate S-adenosyl-L-methionine. Residue aspartate 120 is part of the active site. Lysine 124 contacts substrate. Residues 126–131 are interaction with RNA; that stretch reads RHEKRR. Substrate contacts are provided by residues aspartate 156 and 196-199; that span reads TEYE.

The protein belongs to the class I-like SAM-binding methyltransferase superfamily. TrmB family.

The enzyme catalyses guanosine(46) in tRNA + S-adenosyl-L-methionine = N(7)-methylguanosine(46) in tRNA + S-adenosyl-L-homocysteine. It participates in tRNA modification; N(7)-methylguanine-tRNA biosynthesis. Its function is as follows. Catalyzes the formation of N(7)-methylguanine at position 46 (m7G46) in tRNA. The polypeptide is tRNA (guanine-N(7)-)-methyltransferase (Lactobacillus gasseri (strain ATCC 33323 / DSM 20243 / BCRC 14619 / CIP 102991 / JCM 1131 / KCTC 3163 / NCIMB 11718 / NCTC 13722 / AM63)).